A 65-amino-acid polypeptide reads, in one-letter code: Ferredoxin-like protein in vnf region (65 aa).

2 4Fe-4S ferredoxin-type domains span residues 2–30 (AMAIDGYECTVCGDCEPVCPTGSIVFRDD) and 32–65 (YAIEADSCNECTDVGEPRCLGVCPVDLCIQPLDD). Residues Cys-10, Cys-13, Cys-16, Cys-20, Cys-39, Cys-42, Cys-50, and Cys-54 each coordinate [4Fe-4S] cluster.

It depends on [4Fe-4S] cluster as a cofactor.

The protein is Ferredoxin-like protein in vnf region of Azotobacter vinelandii.